Consider the following 500-residue polypeptide: Probable cytosol aminopeptidase (500 aa).

The Mn(2+) site is built by Lys264 and Asp269. The active site involves Lys276. 3 residues coordinate Mn(2+): Asp287, Asp346, and Glu348. The active site involves Arg350.

The protein belongs to the peptidase M17 family. The cofactor is Mn(2+).

It is found in the cytoplasm. It catalyses the reaction Release of an N-terminal amino acid, Xaa-|-Yaa-, in which Xaa is preferably Leu, but may be other amino acids including Pro although not Arg or Lys, and Yaa may be Pro. Amino acid amides and methyl esters are also readily hydrolyzed, but rates on arylamides are exceedingly low.. The enzyme catalyses Release of an N-terminal amino acid, preferentially leucine, but not glutamic or aspartic acids.. Its function is as follows. Presumably involved in the processing and regular turnover of intracellular proteins. Catalyzes the removal of unsubstituted N-terminal amino acids from various peptides. The sequence is that of Probable cytosol aminopeptidase from Rhodopseudomonas palustris (strain ATCC BAA-98 / CGA009).